A 97-amino-acid chain; its full sequence is uncharacterized protein (97 aa).

Residues 72–97 are disordered; it reads TVERKRSEHTNSRKKDPSAYTWSDVK. Positions 73–88 are enriched in basic and acidic residues; that stretch reads VERKRSEHTNSRKKDP.

Belongs to the chlamydial CPn_0121/CT_031/TC_0300 family.

This is an uncharacterized protein from Chlamydia pneumoniae (Chlamydophila pneumoniae).